The chain runs to 2319 residues: A-kinase anchor protein 6 (2319 aa).

2 stretches are compositionally biased toward polar residues: residues 1-12 (MLTMSVTLSPLR) and 324-339 (GVSSSSGEALTNAAQP). 5 disordered regions span residues 1–24 (MLTMSVTLSPLRSQDLDPMATDAS), 301–369 (VDDK…NATP), 493–532 (SRLKKPHKTSEEVPPCRTPKRGTGSGKQAKNTKSSAVPNG), 566–614 (LQLQ…PSHV), and 691–757 (TRLG…SATK). Residues 340–351 (SSETVQQESSSS) show a composition bias toward low complexity. Composition is skewed to polar residues over residues 518 to 532 (GKQAKNTKSSAVPNG) and 566 to 591 (LQLQSETSSSPAFTQSSESSVGSDNI). Over residues 697 to 711 (SPSSSSDIASSLGES) the composition is skewed to low complexity. The segment covering 735-754 (KYADEKSERASSSEKNESHS) has biased composition (basic and acidic residues). Spectrin repeat units lie at residues 762–848 (QKLM…QLLE) and 1036–1150 (EKVD…LLDD). Phosphoserine is present on Ser-1073. The interval 1250-1272 (KLGETSNEDPGYDEEADNHGGSQ) is disordered. The segment covering 1255-1265 (SNEDPGYDEEA) has biased composition (acidic residues). 2 positions are modified to phosphoserine: Ser-1570 and Ser-1595. Disordered stretches follow at residues 1821–1842 (VSDEMKGSKDISSSEMTNPSDT), 1900–1925 (EGIPERQKGKPNVTSKVSENLGSHGK), and 1963–1983 (KCPNHHHFENQSTASTPTEKS). 3 stretches are compositionally biased toward polar residues: residues 1830 to 1842 (DISSSEMTNPSDT), 1911 to 1920 (NVTSKVSENL), and 1972 to 1982 (NQSTASTPTEK). Residues 2063 to 2076 (IIDMASTALKSKSQ) form a PKA-RII subunit binding domain region. The span at 2198–2215 (FSDSSLSADDADTVALSS) shows a compositional bias: low complexity. Positions 2198–2319 (FSDSSLSADD…HEKRHRNMHR (122 aa)) are disordered.

Interacts with RII subunit of PKA, phosphatase 2B (calcineurin) and AKAP79. Interacts with SYNPO2. As to expression, highly expressed in cardiac and skeletal muscle, followed by brain.

The protein resides in the sarcoplasmic reticulum. The protein localises to the nucleus membrane. Binds to type II regulatory subunits of protein kinase A and anchors/targets them to the nuclear membrane or sarcoplasmic reticulum. May act as an adapter for assembling multiprotein complexes. The chain is A-kinase anchor protein 6 (AKAP6) from Homo sapiens (Human).